Reading from the N-terminus, the 912-residue chain is Ubiquitin carboxyl-terminal hydrolase 33 (912 aa).

The segment at 6–109 adopts a UBP-type zinc-finger fold; it reads SHCPHLDSVG…PSLPHVKPLH (104 aa). Zn(2+) is bound by residues Cys-8, His-10, Cys-30, Cys-33, Cys-43, Cys-48, Cys-53, His-60, His-64, His-70, Cys-83, and Cys-86. Positions 154 to 685 constitute a USP domain; sequence TGLKNIGNTC…EAYVLFYRKS (532 aa). Cys-163 (nucleophile) is an active-site residue. Residues 274 to 334 form a disordered region; it reads ETMEEDKSQS…NSEMSKDWQK (61 aa). Over residues 284 to 296 the composition is skewed to polar residues; it reads DVDFQSCESCSSS. Phosphoserine occurs at positions 346 and 408. The tract at residues 403-433 is disordered; that stretch reads PRLSASPPKSGNLWPGLPPTHKKVQSALSPK. A compositionally biased stretch (basic residues) spans 422–433; sequence THKKVQSALSPK. His-643 serves as the catalytic Proton acceptor. DUSP domains are found at residues 687 to 780 and 788 to 891; these read EEAQ…LYIC and EKIE…RPPV.

Belongs to the peptidase C19 family. USP20/USP33 subfamily. As to quaternary structure, interacts with VHL, leading to its ubiquitination and subsequent degradation. Interacts with ARRB1 and ARRB2. Interacts with ADRB2. Interacts with DIO2. Interacts with ROBO1. Interacts with SELENBP1; in a selenium-dependent manner. Interacts with CCP110. Ubiquitinated via a VHL-dependent pathway for proteasomal degradation.

It localises to the cytoplasm. The protein localises to the perinuclear region. It is found in the cytoskeleton. The protein resides in the microtubule organizing center. Its subcellular location is the centrosome. The catalysed reaction is Thiol-dependent hydrolysis of ester, thioester, amide, peptide and isopeptide bonds formed by the C-terminal Gly of ubiquitin (a 76-residue protein attached to proteins as an intracellular targeting signal).. Functionally, deubiquitinating enzyme involved in various processes such as centrosome duplication, cellular migration and beta-2 adrenergic receptor/ADRB2 recycling. Involved in regulation of centrosome duplication by mediating deubiquitination of CCP110 in S and G2/M phase, leading to stabilize CCP110 during the period which centrioles duplicate and elongate. Involved in cell migration via its interaction with intracellular domain of ROBO1, leading to regulate the Slit signaling. Plays a role in commissural axon guidance cross the ventral midline of the neural tube in a Slit-dependent manner, possibly by mediating the deubiquitination of ROBO1. Acts as a regulator of G-protein coupled receptor (GPCR) signaling by mediating the deubiquitination of beta-arrestins (ARRB1 and ARRB2) and beta-2 adrenergic receptor (ADRB2). Plays a central role in ADRB2 recycling and resensitization after prolonged agonist stimulation by constitutively binding ADRB2, mediating deubiquitination of ADRB2 and inhibiting lysosomal trafficking of ADRB2. Upon dissociation, it is probably transferred to the translocated beta-arrestins, leading to beta-arrestins deubiquitination and disengagement from ADRB2. This suggests the existence of a dynamic exchange between the ADRB2 and beta-arrestins. Deubiquitinates DIO2, thereby regulating thyroid hormone regulation. Mediates deubiquitination of both 'Lys-48'- and 'Lys-63'-linked polyubiquitin chains. The protein is Ubiquitin carboxyl-terminal hydrolase 33 (USP33) of Bos taurus (Bovine).